The chain runs to 1604 residues: Ubiquitin carboxyl-terminal hydrolase 32 (1604 aa).

EF-hand domains lie at 91-126, 228-263, and 264-299; these read KDEE…VDGK, IRPS…CCRG, and PLAE…LLEV. Residues Asp241, Asn243, Asp245, His247, Glu252, Asp277, Asp279, Asp281, and Glu288 each coordinate Ca(2+). The 217-residue stretch at 369–585 folds into the DUSP domain; sequence ATPEEEGQII…SNLALPRPVI (217 aa). Residues 734-1567 form the USP domain; it reads TGLSNLGNTC…SAYILFYEQQ (834 aa). The active-site Nucleophile is the Cys743. Position 1173 is a phosphotyrosine (Tyr1173). Ser1350 carries the post-translational modification Phosphoserine. Residues 1353–1432 are disordered; sequence EEDVLLSKSP…SKENLDTSKE (80 aa). The span at 1360–1370 shows a compositional bias: polar residues; it reads KSPSSLSANVT. Residues 1371–1399 show a composition bias toward low complexity; it reads SSPKGSPSSSRKSGASCPSSKNSSPNSSP. 2 positions are modified to phosphoserine: Ser1372 and Ser1376. Over residues 1415–1424 the composition is skewed to polar residues; it reads GSKNKLSNSK. Ser1454 bears the Phosphoserine mark. The disordered stretch occupies residues 1484 to 1504; that stretch reads SNGQLGNHSEEDSTDDQREET. The segment covering 1491–1504 has biased composition (basic and acidic residues); sequence HSEEDSTDDQREET. The active-site Proton acceptor is the His1526. A Phosphoserine modification is found at Ser1588. Cys1601 is subject to Cysteine methyl ester. Cys1601 is lipidated: S-farnesyl cysteine. Positions 1602–1604 are cleaved as a propeptide — removed in mature form; sequence VLQ.

This sequence belongs to the peptidase C19 family.

Its subcellular location is the golgi apparatus membrane. It carries out the reaction Thiol-dependent hydrolysis of ester, thioester, amide, peptide and isopeptide bonds formed by the C-terminal Gly of ubiquitin (a 76-residue protein attached to proteins as an intracellular targeting signal).. Deubiquitinase that can remove conjugated ubiquitin from target proteins, such as RAB7A and LAMTOR1. Acts as a positive regulator of the mTORC1 signaling by mediating deubiquitination of LAMTOR1, thereby promoting the association between LAMTOR1 and the lysosomal V-ATPase complex and subsequent activation of the mTORC1 complex. The protein is Ubiquitin carboxyl-terminal hydrolase 32 of Mus musculus (Mouse).